The sequence spans 230 residues: Octanoyltransferase (230 aa).

The region spanning 38–215 (AGGADTLLLL…AVCAALDGVL (178 aa)) is the BPL/LPL catalytic domain. Substrate is bound by residues 76-83 (RGGKITWH), 145-147 (AIG), and 158-160 (GFA). Catalysis depends on Cys176, which acts as the Acyl-thioester intermediate.

The protein belongs to the LipB family.

It is found in the cytoplasm. It catalyses the reaction octanoyl-[ACP] + L-lysyl-[protein] = N(6)-octanoyl-L-lysyl-[protein] + holo-[ACP] + H(+). Its pathway is protein modification; protein lipoylation via endogenous pathway; protein N(6)-(lipoyl)lysine from octanoyl-[acyl-carrier-protein]: step 1/2. Catalyzes the transfer of endogenously produced octanoic acid from octanoyl-acyl-carrier-protein onto the lipoyl domains of lipoate-dependent enzymes. Lipoyl-ACP can also act as a substrate although octanoyl-ACP is likely to be the physiological substrate. This Mycobacterium bovis (strain BCG / Tokyo 172 / ATCC 35737 / TMC 1019) protein is Octanoyltransferase.